The chain runs to 688 residues: DNA topoisomerase 1 (688 aa).

The region spanning 3 to 113 (ENLVIVESPA…TENRVVFNEI (111 aa)) is the Toprim domain. 2 residues coordinate Mg(2+): glutamate 9 and aspartate 82. A Topo IA-type catalytic domain is found at 129-556 (EMELVDAQQA…FYSSFKQDVE (428 aa)). Residues 163 to 168 (SAGRVQ) form an interaction with DNA region. The active-site O-(5'-phospho-DNA)-tyrosine intermediate is the tyrosine 298. A disordered region spans residues 322–349 (YGNDYTSNRKSKGQGDQDAHEAIRPSST). Positions 334–344 (GQGDQDAHEAI) are enriched in basic and acidic residues. 3 consecutive C4-type zinc fingers follow at residues 576 to 602 (CEVC…FPDC), 616 to 644 (CPKC…YPEC), and 657 to 680 (CPKC…CSNC).

Belongs to the type IA topoisomerase family. Monomer. Requires Mg(2+) as cofactor.

It catalyses the reaction ATP-independent breakage of single-stranded DNA, followed by passage and rejoining.. Releases the supercoiling and torsional tension of DNA, which is introduced during the DNA replication and transcription, by transiently cleaving and rejoining one strand of the DNA duplex. Introduces a single-strand break via transesterification at a target site in duplex DNA. The scissile phosphodiester is attacked by the catalytic tyrosine of the enzyme, resulting in the formation of a DNA-(5'-phosphotyrosyl)-enzyme intermediate and the expulsion of a 3'-OH DNA strand. The free DNA strand then undergoes passage around the unbroken strand, thus removing DNA supercoils. Finally, in the religation step, the DNA 3'-OH attacks the covalent intermediate to expel the active-site tyrosine and restore the DNA phosphodiester backbone. The polypeptide is DNA topoisomerase 1 (Staphylococcus saprophyticus subsp. saprophyticus (strain ATCC 15305 / DSM 20229 / NCIMB 8711 / NCTC 7292 / S-41)).